Consider the following 699-residue polypeptide: tRNA 5-methylaminomethyl-2-thiouridine biosynthesis bifunctional protein MnmC (699 aa).

A tRNA (mnm(5)s(2)U34)-methyltransferase region spans residues 1-247 (MPAVSRPLPP…KREMLCGEIA (247 aa)). Residues 275 to 699 (IGAGLAGTSV…QPSPTTTETP (425 aa)) form an FAD-dependent cmnm(5)s(2)U34 oxidoreductase region. Positions 675-699 (RGNATLSTSSPNDDAQPSPTTTETP) are disordered.

It in the N-terminal section; belongs to the methyltransferase superfamily. tRNA (mnm(5)s(2)U34)-methyltransferase family. In the C-terminal section; belongs to the DAO family. It depends on FAD as a cofactor.

The protein resides in the cytoplasm. It catalyses the reaction 5-aminomethyl-2-thiouridine(34) in tRNA + S-adenosyl-L-methionine = 5-methylaminomethyl-2-thiouridine(34) in tRNA + S-adenosyl-L-homocysteine + H(+). Catalyzes the last two steps in the biosynthesis of 5-methylaminomethyl-2-thiouridine (mnm(5)s(2)U) at the wobble position (U34) in tRNA. Catalyzes the FAD-dependent demodification of cmnm(5)s(2)U34 to nm(5)s(2)U34, followed by the transfer of a methyl group from S-adenosyl-L-methionine to nm(5)s(2)U34, to form mnm(5)s(2)U34. The polypeptide is tRNA 5-methylaminomethyl-2-thiouridine biosynthesis bifunctional protein MnmC (Chromohalobacter salexigens (strain ATCC BAA-138 / DSM 3043 / CIP 106854 / NCIMB 13768 / 1H11)).